The primary structure comprises 306 residues: Ectoine dioxygenase (306 aa).

Glutamine 127 is an L-ectoine binding site. Lysine 133 contributes to the 2-oxoglutarate binding site. Fe cation-binding residues include histidine 144, aspartate 146, and histidine 245.

The protein belongs to the PhyH family. EctD subfamily. Homodimer. Fe(2+) is required as a cofactor.

It catalyses the reaction L-ectoine + 2-oxoglutarate + O2 = 5-hydroxyectoine + succinate + CO2. Its function is as follows. Involved in the biosynthesis of 5-hydroxyectoine, called compatible solute, which helps organisms to survive extreme osmotic stress by acting as a highly soluble organic osmolyte. Catalyzes the 2-oxoglutarate-dependent selective hydroxylation of L-ectoine to yield (4S,5S)-5-hydroxyectoine. This is Ectoine dioxygenase from Sphingopyxis alaskensis (strain DSM 13593 / LMG 18877 / RB2256) (Sphingomonas alaskensis).